The following is a 291-amino-acid chain: GCN5-related N-acetyltransferase 4, chloroplastic (291 aa).

The N-terminal 61 residues, 1–61, are a transit peptide targeting the chloroplast; it reads MRSTPLGTTA…PSQINSGACN (61 aa). Residues 76–280 form the N-acetyltransferase domain; sequence IVVREARLED…RFTFMMKLVN (205 aa). Acetyl-CoA-binding positions include 199–201 and 207–212; these read VAV and RKGIAK. Residue lysine 217 is modified to N6-acetyllysine. Acetyl-CoA-binding positions include 238–240 and tyrosine 245; that span reads NLG. Residue tyrosine 245 is the Proton donor of the active site. N6-acetyllysine is present on residues lysine 254 and lysine 265.

Belongs to the acetyltransferase family. GNAT subfamily. Oligomer. Autoacetylated at K-217, K-254 and K-265. As to expression, expressed in green tissues.

It localises to the plastid. The protein resides in the chloroplast. The catalysed reaction is an N-terminal L-alpha-aminoacyl-[protein] + acetyl-CoA = N-terminal N(alpha)-acetyl-L-alpha-aminoacyl-[protein] + CoA + H(+). It catalyses the reaction L-lysyl-[protein] + acetyl-CoA = N(6)-acetyl-L-lysyl-[protein] + CoA + H(+). The enzyme catalyses N-terminal L-alanyl-[protein] + acetyl-CoA = N-terminal N(alpha)-acetyl-L-alanyl-[protein] + CoA + H(+). It carries out the reaction N-terminal L-seryl-[protein] + acetyl-CoA = N-terminal N(alpha)-acetyl-L-seryl-[protein] + CoA + H(+). The catalysed reaction is N-terminal L-threonyl-[protein] + acetyl-CoA = N-terminal N(alpha)-acetyl-L-threonyl-[protein] + CoA + H(+). It catalyses the reaction N-terminal L-methionyl-[protein] + acetyl-CoA = N-terminal N(alpha)-acetyl-L-methionyl-[protein] + CoA + H(+). The enzyme catalyses N-terminal L-valyl-[protein] + acetyl-CoA = N-terminal N(alpha)-acetyl-L-valyl-[protein] + CoA + H(+). It carries out the reaction N-terminal glycyl-[protein] + acetyl-CoA = N-terminal N(alpha)-acetylglycyl-[protein] + CoA + H(+). Protein acetyltransferase with dual specificity triggering both N-alpha-acetylation (NTA), with a large spectrum of modified N-termini, including methionine, alanine, serine, threonine and to a lower extent glycine and valine as substrates, and epsilon-lysine acetylation (KA) of several plastid proteins. This Arabidopsis thaliana (Mouse-ear cress) protein is GCN5-related N-acetyltransferase 4, chloroplastic.